The primary structure comprises 284 residues: Aquaporin NIP1-1 (284 aa).

The span at 1–12 (MAGGDNNSQTTN) shows a compositional bias: polar residues. A disordered region spans residues 1–28 (MAGGDNNSQTTNGGSGHEQRAMEEGRKQ). Residues 17–28 (HEQRAMEEGRKQ) show a composition bias toward basic and acidic residues. The next 2 helical transmembrane spans lie at 50 to 70 (IIAE…AVTI) and 78 to 98 (ITFP…VYAV). Positions 107–109 (NPA) match the NPA 1 motif. A run of 3 helical transmembrane segments spans residues 129–149 (AAAQ…MFGG), 166–186 (SLVL…GVAT), and 194–214 (LAGL…GPIS). Positions 219–221 (NPA) match the NPA 2 motif. Residues 236–256 (IWVYIVGPVAGAVAGAWAYNI) form a helical membrane-spanning segment.

Belongs to the MIP/aquaporin (TC 1.A.8) family. NIP (TC 1.A.8.12) subfamily. In terms of tissue distribution, expressed in leaves and at lower levels in roots and anthers.

The protein resides in the membrane. In terms of biological role, aquaporins facilitate the transport of water and small neutral solutes across cell membranes. The protein is Aquaporin NIP1-1 (NIP1-1) of Oryza sativa subsp. japonica (Rice).